We begin with the raw amino-acid sequence, 347 residues long: Phosphoribosylformylglycinamidine cyclo-ligase (347 aa).

Belongs to the AIR synthase family.

It localises to the cytoplasm. The enzyme catalyses 2-formamido-N(1)-(5-O-phospho-beta-D-ribosyl)acetamidine + ATP = 5-amino-1-(5-phospho-beta-D-ribosyl)imidazole + ADP + phosphate + H(+). The protein operates within purine metabolism; IMP biosynthesis via de novo pathway; 5-amino-1-(5-phospho-D-ribosyl)imidazole from N(2)-formyl-N(1)-(5-phospho-D-ribosyl)glycinamide: step 2/2. This chain is Phosphoribosylformylglycinamidine cyclo-ligase, found in Alcanivorax borkumensis (strain ATCC 700651 / DSM 11573 / NCIMB 13689 / SK2).